A 366-amino-acid polypeptide reads, in one-letter code: tRNA N6-adenosine threonylcarbamoyltransferase (366 aa).

Fe cation contacts are provided by His119 and His123. Substrate-binding positions include 142 to 146 (LVSGG), Asp175, Gly188, Asp192, and Asn281. Residue Asp309 coordinates Fe cation.

This sequence belongs to the KAE1 / TsaD family. Requires Fe(2+) as cofactor.

It localises to the cytoplasm. The enzyme catalyses L-threonylcarbamoyladenylate + adenosine(37) in tRNA = N(6)-L-threonylcarbamoyladenosine(37) in tRNA + AMP + H(+). In terms of biological role, required for the formation of a threonylcarbamoyl group on adenosine at position 37 (t(6)A37) in tRNAs that read codons beginning with adenine. Is involved in the transfer of the threonylcarbamoyl moiety of threonylcarbamoyl-AMP (TC-AMP) to the N6 group of A37, together with TsaE and TsaB. TsaD likely plays a direct catalytic role in this reaction. The sequence is that of tRNA N6-adenosine threonylcarbamoyltransferase from Synechococcus sp. (strain JA-3-3Ab) (Cyanobacteria bacterium Yellowstone A-Prime).